Consider the following 328-residue polypeptide: Formyltetrahydrofolate deformylase 2, mitochondrial (328 aa).

Residues 1 to 12 (MIRRVSTTSCLS) constitute a mitochondrion transit peptide. An ACT domain is found at 46–129 (FHVFHCPDVV…SVVRVPSLDP (84 aa)). D272 is an active-site residue.

The protein belongs to the PurU family. As to expression, expressed in leaves, cotyledons, roots, seeds and flowers.

It is found in the mitochondrion. The catalysed reaction is (6R)-10-formyltetrahydrofolate + H2O = (6S)-5,6,7,8-tetrahydrofolate + formate + H(+). In terms of biological role, deformylase involved in photorespiration. Prevents excessive accumulation of 5-formyl tetrahydrofolate (THF), a potent inhibitor of the Gly decarboxylase/Ser hydroxymethyltransferase complex. The protein is Formyltetrahydrofolate deformylase 2, mitochondrial (PURU2) of Arabidopsis thaliana (Mouse-ear cress).